Reading from the N-terminus, the 95-residue chain is Small ribosomal subunit protein bS16 (95 aa).

This sequence belongs to the bacterial ribosomal protein bS16 family.

The protein is Small ribosomal subunit protein bS16 of Roseiflexus sp. (strain RS-1).